The following is a 1143-amino-acid chain: Major DNA-binding protein (1143 aa).

The required for nuclear localization stretch occupies residues 1140–1143; the sequence is RMRL.

Belongs to the herpesviridae major DNA-binding protein family. In terms of assembly, homooligomers. Forms double-helical filaments necessary for the formation of replication compartments within the host nucleus. Interacts with the origin-binding protein. Interacts with the helicase primase complex; this interaction stimulates primer synthesis activity of the helicase-primase complex. Interacts with the DNA polymerase. Interacts with the alkaline exonuclease; this interaction increases its nuclease processivity.

The protein localises to the host nucleus. Plays several crucial roles in viral infection. Participates in the opening of the viral DNA origin to initiate replication by interacting with the origin-binding protein. May disrupt loops, hairpins and other secondary structures present on ssDNA to reduce and eliminate pausing of viral DNA polymerase at specific sites during elongation. Promotes viral DNA recombination by performing strand-transfer, characterized by the ability to transfer a DNA strand from a linear duplex to a complementary single-stranded DNA circle. Can also catalyze the renaturation of complementary single strands. Additionally, reorganizes the host cell nucleus, leading to the formation of prereplicative sites and replication compartments. This process is driven by the protein which can form double-helical filaments in the absence of DNA. In Elephantid herpesvirus 1 (isolate Asian elephant/Berlin/Kiba/1998) (EIHV-1), this protein is Major DNA-binding protein.